The sequence spans 102 residues: NADH-quinone oxidoreductase subunit K (102 aa).

Transmembrane regions (helical) follow at residues 4–24 (IPME…LVGL), 30–50 (MLFV…AFIV), and 62–82 (VMFL…LALL).

This sequence belongs to the complex I subunit 4L family. In terms of assembly, NDH-1 is composed of 14 different subunits. Subunits NuoA, H, J, K, L, M, N constitute the membrane sector of the complex.

It is found in the cell inner membrane. It carries out the reaction a quinone + NADH + 5 H(+)(in) = a quinol + NAD(+) + 4 H(+)(out). In terms of biological role, NDH-1 shuttles electrons from NADH, via FMN and iron-sulfur (Fe-S) centers, to quinones in the respiratory chain. The immediate electron acceptor for the enzyme in this species is believed to be ubiquinone. Couples the redox reaction to proton translocation (for every two electrons transferred, four hydrogen ions are translocated across the cytoplasmic membrane), and thus conserves the redox energy in a proton gradient. The sequence is that of NADH-quinone oxidoreductase subunit K from Chromohalobacter salexigens (strain ATCC BAA-138 / DSM 3043 / CIP 106854 / NCIMB 13768 / 1H11).